The following is a 459-amino-acid chain: ATP-dependent protease ATPase subunit HslU (459 aa).

ATP-binding positions include valine 26, 68-73, aspartate 271, glutamate 337, and arginine 409; that span reads GVGKTE.

The protein belongs to the ClpX chaperone family. HslU subfamily. In terms of assembly, a double ring-shaped homohexamer of HslV is capped on each side by a ring-shaped HslU homohexamer. The assembly of the HslU/HslV complex is dependent on binding of ATP.

It localises to the cytoplasm. In terms of biological role, ATPase subunit of a proteasome-like degradation complex; this subunit has chaperone activity. The binding of ATP and its subsequent hydrolysis by HslU are essential for unfolding of protein substrates subsequently hydrolyzed by HslV. HslU recognizes the N-terminal part of its protein substrates and unfolds these before they are guided to HslV for hydrolysis. In Xylella fastidiosa (strain M12), this protein is ATP-dependent protease ATPase subunit HslU.